The sequence spans 344 residues: Putative 2-hydroxyacid dehydrogenase YoaD (344 aa).

Asp193 is a binding site for NAD(+). Arg251 is an active-site residue. Asp275 serves as a coordination point for NAD(+). Residue Glu280 is part of the active site. His300 serves as the catalytic Proton donor.

Belongs to the D-isomer specific 2-hydroxyacid dehydrogenase family.

This is Putative 2-hydroxyacid dehydrogenase YoaD (yoaD) from Bacillus subtilis (strain 168).